The following is a 259-amino-acid chain: Triosephosphate isomerase (259 aa).

Residue 10–12 participates in substrate binding; that stretch reads NWK. Catalysis depends on His-102, which acts as the Electrophile. Glu-172 (proton acceptor) is an active-site residue. Substrate is bound by residues Gly-178, Ser-218, and 239-240; that span reads GG.

It belongs to the triosephosphate isomerase family. As to quaternary structure, homodimer.

It is found in the cytoplasm. It carries out the reaction D-glyceraldehyde 3-phosphate = dihydroxyacetone phosphate. It participates in carbohydrate biosynthesis; gluconeogenesis. It functions in the pathway carbohydrate degradation; glycolysis; D-glyceraldehyde 3-phosphate from glycerone phosphate: step 1/1. Its function is as follows. Involved in the gluconeogenesis. Catalyzes stereospecifically the conversion of dihydroxyacetone phosphate (DHAP) to D-glyceraldehyde-3-phosphate (G3P). The chain is Triosephosphate isomerase from Leifsonia xyli subsp. xyli (strain CTCB07).